We begin with the raw amino-acid sequence, 204 residues long: Glycerol-3-phosphate acyltransferase (204 aa).

Transmembrane regions (helical) follow at residues 12–32 (LVMGYLLGSLPSGYLAAHWLA), 85–105 (WQVAAGLAALAGHIWPVWLGW), 117–137 (MLLGISWPVGLACFGIFLTVL), 142–162 (IVSLSSIIAALSLPLLMILRF), and 163–183 (QGNSPPAYLAVAFAAMAMVVW).

This sequence belongs to the PlsY family. As to quaternary structure, probably interacts with PlsX.

The protein resides in the cell inner membrane. It carries out the reaction an acyl phosphate + sn-glycerol 3-phosphate = a 1-acyl-sn-glycero-3-phosphate + phosphate. Its pathway is lipid metabolism; phospholipid metabolism. Catalyzes the transfer of an acyl group from acyl-phosphate (acyl-PO(4)) to glycerol-3-phosphate (G3P) to form lysophosphatidic acid (LPA). This enzyme utilizes acyl-phosphate as fatty acyl donor, but not acyl-CoA or acyl-ACP. The polypeptide is Glycerol-3-phosphate acyltransferase (Prochlorococcus marinus (strain MIT 9313)).